Reading from the N-terminus, the 441-residue chain is Ribulose bisphosphate carboxylase large chain (441 aa).

Lysine 5 is modified (N6,N6,N6-trimethyllysine). Asparagine 114 and threonine 164 together coordinate substrate. Residue lysine 166 is the Proton acceptor of the active site. Lysine 168 serves as a coordination point for substrate. Mg(2+) is bound by residues lysine 192, aspartate 194, and glutamate 195. Lysine 192 carries the post-translational modification N6-carboxylysine. Histidine 285 (proton acceptor) is an active-site residue. Residues arginine 286, histidine 318, and serine 370 each coordinate substrate.

This sequence belongs to the RuBisCO large chain family. Type I subfamily. In terms of assembly, heterohexadecamer of 8 large chains and 8 small chains; disulfide-linked. The disulfide link is formed within the large subunit homodimers. The cofactor is Mg(2+). In terms of processing, the disulfide bond which can form in the large chain dimeric partners within the hexadecamer appears to be associated with oxidative stress and protein turnover.

Its subcellular location is the plastid. The protein localises to the chloroplast. It carries out the reaction 2 (2R)-3-phosphoglycerate + 2 H(+) = D-ribulose 1,5-bisphosphate + CO2 + H2O. The enzyme catalyses D-ribulose 1,5-bisphosphate + O2 = 2-phosphoglycolate + (2R)-3-phosphoglycerate + 2 H(+). RuBisCO catalyzes two reactions: the carboxylation of D-ribulose 1,5-bisphosphate, the primary event in carbon dioxide fixation, as well as the oxidative fragmentation of the pentose substrate in the photorespiration process. Both reactions occur simultaneously and in competition at the same active site. The polypeptide is Ribulose bisphosphate carboxylase large chain (Pellaea andromedifolia (Coffee fern)).